We begin with the raw amino-acid sequence, 91 residues long: ATP synthase subunit c (91 aa).

A run of 2 helical transmembrane segments spans residues 4–24 and 53–73; these read FTMC…GTGI and IGLA…LIIL.

This sequence belongs to the ATPase C chain family. In terms of assembly, F-type ATPases have 2 components, F(1) - the catalytic core - and F(0) - the membrane proton channel. F(1) has five subunits: alpha(3), beta(3), gamma(1), delta(1), epsilon(1). F(0) has three main subunits: a(1), b(2) and c(10-14). The alpha and beta chains form an alternating ring which encloses part of the gamma chain. F(1) is attached to F(0) by a central stalk formed by the gamma and epsilon chains, while a peripheral stalk is formed by the delta and b chains.

The protein resides in the cell inner membrane. F(1)F(0) ATP synthase produces ATP from ADP in the presence of a proton or sodium gradient. F-type ATPases consist of two structural domains, F(1) containing the extramembraneous catalytic core and F(0) containing the membrane proton channel, linked together by a central stalk and a peripheral stalk. During catalysis, ATP synthesis in the catalytic domain of F(1) is coupled via a rotary mechanism of the central stalk subunits to proton translocation. In terms of biological role, key component of the F(0) channel; it plays a direct role in translocation across the membrane. A homomeric c-ring of between 10-14 subunits forms the central stalk rotor element with the F(1) delta and epsilon subunits. This is ATP synthase subunit c from Citrifermentans bemidjiense (strain ATCC BAA-1014 / DSM 16622 / JCM 12645 / Bem) (Geobacter bemidjiensis).